The sequence spans 289 residues: ATP synthase gamma chain (289 aa).

Belongs to the ATPase gamma chain family. F-type ATPases have 2 components, CF(1) - the catalytic core - and CF(0) - the membrane proton channel. CF(1) has five subunits: alpha(3), beta(3), gamma(1), delta(1), epsilon(1). CF(0) has three main subunits: a, b and c.

Its subcellular location is the cell inner membrane. Produces ATP from ADP in the presence of a proton gradient across the membrane. The gamma chain is believed to be important in regulating ATPase activity and the flow of protons through the CF(0) complex. This is ATP synthase gamma chain from Haemophilus influenzae (strain ATCC 51907 / DSM 11121 / KW20 / Rd).